We begin with the raw amino-acid sequence, 149 residues long: 3-dehydroquinate dehydratase (149 aa).

Residue tyrosine 26 is the Proton acceptor of the active site. Residues asparagine 77, histidine 83, and aspartate 90 each contribute to the substrate site. Histidine 103 serves as the catalytic Proton donor. Residues 104-105 (LS) and arginine 114 each bind substrate.

This sequence belongs to the type-II 3-dehydroquinase family. Homododecamer.

It catalyses the reaction 3-dehydroquinate = 3-dehydroshikimate + H2O. Its pathway is metabolic intermediate biosynthesis; chorismate biosynthesis; chorismate from D-erythrose 4-phosphate and phosphoenolpyruvate: step 3/7. Functionally, catalyzes a trans-dehydration via an enolate intermediate. The sequence is that of 3-dehydroquinate dehydratase from Haemophilus influenzae (strain 86-028NP).